The chain runs to 390 residues: MNQANNVLDSIYQPDLEIMNQPEIELDDLLIEEDEDLLLADDGDIDEFLEPQTDEDDAKSGKAAKSRRRTQSKKKHYTEDSIRLYLQEIGRIRLLRADEEIELARKIADLLELERVRERLSEKLERDPRDSEWAEAVQLPLPAFRYRLHIGRRAKDKMVQSNLRLVVSIAKKYMNRGLSFQDLIQEGSLGLIRAAEKFDHEKGYKFSTYATWWIRQAITRAIADQSRTIRLPVHLYETISRIKKTTKLLSQEMGRKPTEEEIATRMEMTIEKLRFIAKSAQLPISLETPIGKEEDSRLGDFIESDGETPEDQVSKNLLREDLEKVLDSLSPRERDVLRLRYGLDDGRMKTLEEIGQIFNVTRERIRQIEAKALRKLRHPNRNSVLKEYIR.

The span at 48–57 (FLEPQTDEDD) shows a compositional bias: acidic residues. The segment at 48 to 75 (FLEPQTDEDDAKSGKAAKSRRRTQSKKK) is disordered. Residues 62–75 (KAAKSRRRTQSKKK) are compositionally biased toward basic residues. Residues 158–228 (MVQSNLRLVV…TRAIADQSRT (71 aa)) are sigma-70 factor domain-2. The Interaction with polymerase core subunit RpoC signature appears at 182 to 185 (DLIQ). The interval 237-312 (ETISRIKKTT…ESDGETPEDQ (76 aa)) is sigma-70 factor domain-3. Residues 325–378 (VLDSLSPRERDVLRLRYGLDDGRMKTLEEIGQIFNVTRERIRQIEAKALRKLRH) are sigma-70 factor domain-4. Residues 351–370 (LEEIGQIFNVTRERIRQIEA) constitute a DNA-binding region (H-T-H motif).

Belongs to the sigma-70 factor family. RpoD/SigA subfamily. In terms of assembly, interacts transiently with the RNA polymerase catalytic core.

It is found in the cytoplasm. Sigma factors are initiation factors that promote the attachment of RNA polymerase to specific initiation sites and are then released. This sigma factor is the primary sigma factor during exponential growth. The polypeptide is RNA polymerase sigma factor SigA (Nostoc sp. (strain PCC 7120 / SAG 25.82 / UTEX 2576)).